The primary structure comprises 346 residues: Porphobilinogen deaminase (346 aa).

Position 242 is an S-(dipyrrolylmethanemethyl)cysteine (C242). The segment at 317–346 (ATEPGARSGTGAVRPPETDLSNPSPMENPQ) is disordered. The span at 335 to 346 (DLSNPSPMENPQ) shows a compositional bias: polar residues.

Belongs to the HMBS family. Monomer. Dipyrromethane is required as a cofactor.

The enzyme catalyses 4 porphobilinogen + H2O = hydroxymethylbilane + 4 NH4(+). It functions in the pathway porphyrin-containing compound metabolism; protoporphyrin-IX biosynthesis; coproporphyrinogen-III from 5-aminolevulinate: step 2/4. In terms of biological role, tetrapolymerization of the monopyrrole PBG into the hydroxymethylbilane pre-uroporphyrinogen in several discrete steps. The sequence is that of Porphobilinogen deaminase from Nocardia farcinica (strain IFM 10152).